A 222-amino-acid polypeptide reads, in one-letter code: Ras-related protein Rab11D (222 aa).

Position 22–29 (22–29 (GDSAVGKS)) interacts with GTP. The Effector region signature appears at 44–52 (SKATIGVEF). GTP-binding positions include 70 to 74 (DTAGQ) and 128 to 131 (NKTD). S-geranylgeranyl cysteine attachment occurs at residues cysteine 219 and cysteine 220.

This sequence belongs to the small GTPase superfamily. Rab family.

Its subcellular location is the cell membrane. This chain is Ras-related protein Rab11D (RAB11D), found in Nicotiana tabacum (Common tobacco).